We begin with the raw amino-acid sequence, 41 residues long: Photosystem II reaction center protein L (41 aa).

The chain crosses the membrane as a helical span at residues 20-40 (SLYLGLLLVFVVGILFSSYFF).

The protein belongs to the PsbL family. As to quaternary structure, PSII is composed of 1 copy each of membrane proteins PsbA, PsbB, PsbC, PsbD, PsbE, PsbF, PsbH, PsbI, PsbJ, PsbK, PsbL, PsbM, PsbT, PsbX, PsbY, PsbZ, Psb30/Ycf12, peripheral proteins PsbO, CyanoQ (PsbQ), PsbU, PsbV and a large number of cofactors. It forms dimeric complexes.

It is found in the cellular thylakoid membrane. Functionally, one of the components of the core complex of photosystem II (PSII). PSII is a light-driven water:plastoquinone oxidoreductase that uses light energy to abstract electrons from H(2)O, generating O(2) and a proton gradient subsequently used for ATP formation. It consists of a core antenna complex that captures photons, and an electron transfer chain that converts photonic excitation into a charge separation. This subunit is found at the monomer-monomer interface and is required for correct PSII assembly and/or dimerization. In Trichodesmium erythraeum (strain IMS101), this protein is Photosystem II reaction center protein L.